A 279-amino-acid chain; its full sequence is MAFQGTSRTLTQQSSAATSDELQKLLFSPEAIKKMATECDLGRHHWMRADNAISVRPLVPEVTHGRIASFFKSGYDAGELSSKGYMSVTQVLCAVTRTVSTDAEGSLRIYLADLGDKELSPIDRQCVTLHNHDLPALVSFQPTYDCPMESVGNRKRCFAVVIERHGYIEYTGTTASVCSNWQARFSSKNNNYTHIAAGKTLVLPFNRLAEQTKPSAVARLLKSQLNNIESSQYVLTDAKINQNARSESEEIIVESPPIVIGSSSASRSEAFRPQVVNGL.

The protein belongs to the cucumovirus movement protein family.

Its subcellular location is the host cell junction. It is found in the host plasmodesma. Its function is as follows. Transports viral genome to neighboring plant cells directly through plasmosdesmata, without any budding. The movement protein allows efficient cell to cell propagation, by bypassing the host cell wall barrier. Acts by forming a tubular structure at the host plasmodesmata, enlarging it enough to allow free passage of virion capsids. The sequence is that of Movement protein from Cucumber mosaic virus (strain Ixora) (CMV).